A 262-amino-acid chain; its full sequence is Indole-3-glycerol phosphate synthase (262 aa).

The protein belongs to the TrpC family.

It carries out the reaction 1-(2-carboxyphenylamino)-1-deoxy-D-ribulose 5-phosphate + H(+) = (1S,2R)-1-C-(indol-3-yl)glycerol 3-phosphate + CO2 + H2O. Its pathway is amino-acid biosynthesis; L-tryptophan biosynthesis; L-tryptophan from chorismate: step 4/5. This is Indole-3-glycerol phosphate synthase from Leuconostoc mesenteroides subsp. mesenteroides (strain ATCC 8293 / DSM 20343 / BCRC 11652 / CCM 1803 / JCM 6124 / NCDO 523 / NBRC 100496 / NCIMB 8023 / NCTC 12954 / NRRL B-1118 / 37Y).